Here is a 302-residue protein sequence, read N- to C-terminus: uncharacterized protein (302 aa).

Disordered stretches follow at residues 1–167 (MPCR…QSSE) and 180–199 (PSLC…QRAS). Residues 39-54 (EESHAPSRDPRDHQGS) show a composition bias toward basic and acidic residues. Polar residues-rich tracts occupy residues 123-133 (LSTSSCASVSR) and 183-197 (CPSQ…SPQR).

This is an uncharacterized protein from Homo sapiens (Human).